The sequence spans 280 residues: UPF0276 protein CC_3255 (280 aa).

This sequence belongs to the UPF0276 family.

The chain is UPF0276 protein CC_3255 from Caulobacter vibrioides (strain ATCC 19089 / CIP 103742 / CB 15) (Caulobacter crescentus).